Reading from the N-terminus, the 232-residue chain is Large ribosomal subunit protein uL1 (232 aa).

The protein belongs to the universal ribosomal protein uL1 family. As to quaternary structure, part of the 50S ribosomal subunit.

Binds directly to 23S rRNA. The L1 stalk is quite mobile in the ribosome, and is involved in E site tRNA release. Its function is as follows. Protein L1 is also a translational repressor protein, it controls the translation of the L11 operon by binding to its mRNA. This chain is Large ribosomal subunit protein uL1, found in Aromatoleum aromaticum (strain DSM 19018 / LMG 30748 / EbN1) (Azoarcus sp. (strain EbN1)).